The sequence spans 651 residues: Zinc metalloproteinase nas-32 (651 aa).

The N-terminal stretch at 1–21 (MRRFFICYIGFLSIFLDFILA) is a signal peptide. The propeptide occupies 22 to 202 (DKDNNSEEER…EQSSKSRRKK (181 aa)). N-linked (GlcNAc...) asparagine glycans are attached at residues asparagine 25, asparagine 72, and asparagine 251. Residues 203–394 (RQIDNLAQFW…KMLNTHYSCS (192 aa)) form the Peptidase M12A domain. Intrachain disulfides connect cysteine 245/cysteine 393, cysteine 264/cysteine 283, cysteine 395/cysteine 412, cysteine 415/cysteine 426, cysteine 434/cysteine 467, and cysteine 495/cysteine 516. Histidine 291 provides a ligand contact to Zn(2+). The active site involves glutamate 292. Zn(2+) is bound by residues histidine 295 and histidine 301. In terms of domain architecture, EGF-like spans 380–433 (TFLDLKMLNTHYSCSCPTILSCGNGGFTNPANCSVCICPYGFGGALCTERTDYG). Asparagine 411 carries N-linked (GlcNAc...) asparagine glycosylation. The CUB domain maps to 434–554 (CGSTLTATDT…TTYTWSYRYV (121 aa)). N-linked (GlcNAc...) asparagine glycosylation occurs at asparagine 453. A glycan (N-linked (GlcNAc...) asparagine) is linked at asparagine 557. 3 cysteine pairs are disulfide-bonded: cysteine 610–cysteine 647, cysteine 619–cysteine 640, and cysteine 628–cysteine 644. In terms of domain architecture, ShKT spans 610–647 (CKDRFPKSQCSTYSTNGMCTQQPPLAAEFSCAETCGFC).

Zn(2+) serves as cofactor. As to expression, expressed in pharyngeal, anal depressor, intestinal and vulva muscles, head neurons and head mesodermal cell.

The protein localises to the secreted. In terms of biological role, metalloprotease. The sequence is that of Zinc metalloproteinase nas-32 (nas-32) from Caenorhabditis elegans.